A 114-amino-acid polypeptide reads, in one-letter code: T cell receptor beta variable 9 (114 aa).

Residues 1 to 21 (MGFRLLCCVAFCLLGAGPVDS) form the signal peptide. The region spanning 22-114 (GVTQTPKHLI…SALYFCASSV (93 aa)) is the Ig-like domain. An intrachain disulfide couples Cys-42 to Cys-110. Asn-96 carries an N-linked (GlcNAc...) asparagine glycan.

As to quaternary structure, alpha-beta TR is a heterodimer composed of an alpha and beta chain; disulfide-linked. The alpha-beta TR is associated with the transmembrane signaling CD3 coreceptor proteins to form the TR-CD3 (TcR or TCR). The assembly of alpha-beta TR heterodimers with CD3 occurs in the endoplasmic reticulum where a single alpha-beta TR heterodimer associates with one CD3D-CD3E heterodimer, one CD3G-CD3E heterodimer and one CD247 homodimer forming a stable octameric structure. CD3D-CD3E and CD3G-CD3E heterodimers preferentially associate with TR alpha and TR beta chains, respectively. The association of the CD247 homodimer is the last step of TcR assembly in the endoplasmic reticulum and is required for transport to the cell surface.

It is found in the cell membrane. Functionally, v region of the variable domain of T cell receptor (TR) beta chain that participates in the antigen recognition. Alpha-beta T cell receptors are antigen specific receptors which are essential to the immune response and are present on the cell surface of T lymphocytes. Recognize peptide-major histocompatibility (MH) (pMH) complexes that are displayed by antigen presenting cells (APC), a prerequisite for efficient T cell adaptive immunity against pathogens. Binding of alpha-beta TR to pMH complex initiates TR-CD3 clustering on the cell surface and intracellular activation of LCK that phosphorylates the ITAM motifs of CD3G, CD3D, CD3E and CD247 enabling the recruitment of ZAP70. In turn ZAP70 phosphorylates LAT, which recruits numerous signaling molecules to form the LAT signalosome. The LAT signalosome propagates signal branching to three major signaling pathways, the calcium, the mitogen-activated protein kinase (MAPK) kinase and the nuclear factor NF-kappa-B (NF-kB) pathways, leading to the mobilization of transcription factors that are critical for gene expression and essential for T cell growth and differentiation. The T cell repertoire is generated in the thymus, by V-(D)-J rearrangement. This repertoire is then shaped by intrathymic selection events to generate a peripheral T cell pool of self-MH restricted, non-autoaggressive T cells. Post-thymic interaction of alpha-beta TR with the pMH complexes shapes TR structural and functional avidity. The polypeptide is T cell receptor beta variable 9 (Homo sapiens (Human)).